Reading from the N-terminus, the 514-residue chain is tRNA-2-methylthio-N(6)-dimethylallyladenosine synthase (514 aa).

The disordered stretch occupies residues 1–21; it reads MNEEQRKASSVDVLAERDKKA. An MTTase N-terminal domain is found at 68–186; the sequence is RTFLIKTYGC…LPEILEEAYL (119 aa). Residues cysteine 77, cysteine 113, cysteine 147, cysteine 223, cysteine 227, and cysteine 230 each contribute to the [4Fe-4S] cluster site. Residues 209 to 440 enclose the Radical SAM core domain; sequence REGNIKAWVN…KKVGHYSQIA (232 aa). The TRAM domain maps to 442–505; sequence SKYEGQTVTV…QYSLNGSFIK (64 aa).

It belongs to the methylthiotransferase family. MiaB subfamily. Monomer. The cofactor is [4Fe-4S] cluster.

It localises to the cytoplasm. It carries out the reaction N(6)-dimethylallyladenosine(37) in tRNA + (sulfur carrier)-SH + AH2 + 2 S-adenosyl-L-methionine = 2-methylsulfanyl-N(6)-dimethylallyladenosine(37) in tRNA + (sulfur carrier)-H + 5'-deoxyadenosine + L-methionine + A + S-adenosyl-L-homocysteine + 2 H(+). Functionally, catalyzes the methylthiolation of N6-(dimethylallyl)adenosine (i(6)A), leading to the formation of 2-methylthio-N6-(dimethylallyl)adenosine (ms(2)i(6)A) at position 37 in tRNAs that read codons beginning with uridine. The polypeptide is tRNA-2-methylthio-N(6)-dimethylallyladenosine synthase (Staphylococcus aureus (strain USA300 / TCH1516)).